We begin with the raw amino-acid sequence, 308 residues long: Olfactory receptor 13H1 (308 aa).

Over 1–25 (MAMDNVTAVFQFLLIGISNYPQWRD) the chain is Extracellular. Residue N5 is glycosylated (N-linked (GlcNAc...) asparagine). Residues 26-46 (TFFTLVLIIYLSTLLGNGFMI) traverse the membrane as a helical segment. Residues 47 to 54 (FLIHFDPN) lie on the Cytoplasmic side of the membrane. The helical transmembrane segment at 55-75 (LHTPIYFFLSNLSFLDLCYGT) threads the bilayer. Topologically, residues 76–99 (ASMPQALVHCFSTHPYLSYPRCLA) are extracellular. A disulfide bond links C97 and C188. Residues 100–120 (QTSVSLALATAECLLLAAMAY) form a helical membrane-spanning segment. At 121–139 (DRVVAISNPLRYSVVMNGP) the chain is on the cytoplasmic side. Residues 140 to 159 (VCVCLVATSWGTSLVLTAML) traverse the membrane as a helical segment. At 160–196 (ILSLRLHFCGANVINHFACEILSLIKLTCSDTSLNEF) the chain is on the extracellular side. The helical transmembrane segment at 197–216 (MILITSIFTLLLPFGFVLLS) threads the bilayer. Residues 217–236 (YIRIAMAIIRIRSLQGRLKA) lie on the Cytoplasmic side of the membrane. A helical transmembrane segment spans residues 237 to 257 (FTTCGSHLTVVTIFYGSAISM). The Extracellular segment spans residues 258–270 (YMKTQSKSYPDQD). Residues 271 to 291 (KFISVFYGALTPMLNPLIYSL) form a helical membrane-spanning segment. At 292–308 (RKKDVKRAIRKVMLKRT) the chain is on the cytoplasmic side.

This sequence belongs to the G-protein coupled receptor 1 family.

The protein resides in the cell membrane. In terms of biological role, odorant receptor. The protein is Olfactory receptor 13H1 (OR13H1) of Homo sapiens (Human).